We begin with the raw amino-acid sequence, 247 residues long: ATP synthase subunit a, chloroplastic (247 aa).

A run of 5 helical transmembrane segments spans residues 38-58 (QVLI…TIAV), 95-115 (VPFI…GALL), 134-154 (INTT…AGLT), 199-219 (LVVV…VMFL), and 220-240 (GLFT…AYIG).

Belongs to the ATPase A chain family. In terms of assembly, F-type ATPases have 2 components, CF(1) - the catalytic core - and CF(0) - the membrane proton channel. CF(1) has five subunits: alpha(3), beta(3), gamma(1), delta(1), epsilon(1). CF(0) has four main subunits: a, b, b' and c.

It is found in the plastid. The protein resides in the chloroplast thylakoid membrane. Functionally, key component of the proton channel; it plays a direct role in the translocation of protons across the membrane. In Buxus microphylla (Littleleaf boxwood), this protein is ATP synthase subunit a, chloroplastic.